Consider the following 85-residue polypeptide: Conotoxin Cap15b (85 aa).

Positions Met-1 to Ser-23 are cleaved as a signal peptide. The propeptide occupies Asp-24–Arg-49. Gln-50 carries the post-translational modification Pyrrolidone carboxylic acid.

This sequence belongs to the conotoxin O2 superfamily. Contains 4 disulfide bonds. In terms of tissue distribution, expressed by the venom duct.

Its subcellular location is the secreted. This chain is Conotoxin Cap15b, found in Conus capitaneus (Captain cone).